Reading from the N-terminus, the 739-residue chain is Catalase-peroxidase 2 (739 aa).

The signal sequence occupies residues 1–26 (MKKSTIPSMSALTLAMSLAFGGAAIA). Positions 105 to 227 (WHSAGVYRIF…MGATQMGLIY (123 aa)) form a cross-link, tryptophyl-tyrosyl-methioninium (Trp-Tyr) (with M-253). The active-site Proton acceptor is the H106. The tryptophyl-tyrosyl-methioninium (Tyr-Met) (with W-105) cross-link spans 227 to 253 (YVNPEGPNGVPDPLASAKEIRDTFGRM). H268 lines the heme b pocket.

Belongs to the peroxidase family. Peroxidase/catalase subfamily. As to quaternary structure, homodimer or homotetramer. Heme b serves as cofactor. Formation of the three residue Trp-Tyr-Met cross-link is important for the catalase, but not the peroxidase activity of the enzyme.

The catalysed reaction is H2O2 + AH2 = A + 2 H2O. It carries out the reaction 2 H2O2 = O2 + 2 H2O. Its function is as follows. Bifunctional enzyme with both catalase and broad-spectrum peroxidase activity. In Shewanella sp. (strain ANA-3), this protein is Catalase-peroxidase 2.